The sequence spans 519 residues: Matrix metalloproteinase-B (519 aa).

The signal sequence occupies residues 1–26 (MTKWSPNGNPLSTIYLILSLFTLAHT). The propeptide at 27 to 126 (APTTQHSRTT…RQEQTKRTKR (100 aa)) is activation peptide. Residues 29-39 (TTQHSRTTTQL) show a composition bias toward polar residues. The interval 29–50 (TTQHSRTTTQLRLEDEDGGGGV) is disordered. The Cysteine switch signature appears at 109–116 (PRCTQTDV). Residues cysteine 111, histidine 208, aspartate 210, histidine 232, histidine 247, and histidine 276 each coordinate Zn(2+). Glutamate 277 is a catalytic residue. Zn(2+) is bound by residues histidine 280 and histidine 286. A glycan (N-linked (GlcNAc...) asparagine) is linked at asparagine 341. Positions 391 to 402 (KDKRSYRGDSKI) are enriched in basic and acidic residues. The interval 391-410 (KDKRSYRGDSKIPKCSSNNS) is disordered. N-linked (GlcNAc...) asparagine glycosylation occurs at asparagine 408.

The protein belongs to the peptidase M10A family. Zn(2+) serves as cofactor. Expressed in spermatheca and spermathecal-uterine valve, weakly in vulva and anal muscles and in two cells in the head (probably RMEV and RMED motor neurons).

The protein resides in the secreted. The protein localises to the extracellular space. It is found in the extracellular matrix. Its activity is regulated as follows. Inhibited by human TIMP1 and TIMP2 and the broad MMP inhibitors BB94 (Batimastat) and CT543. Its function is as follows. Metalloprotease involved in molting, a process during larval stages in which a new cuticle is formed and the old cuticle is shed. Plays a role in thermotolerance probably by preventing the accumulation of oxidized lipoproteins and cholesterol. The sequence is that of Matrix metalloproteinase-B from Caenorhabditis elegans.